Reading from the N-terminus, the 204-residue chain is Thiamine-phosphate synthase (204 aa).

4-amino-2-methyl-5-(diphosphooxymethyl)pyrimidine-binding positions include 34–38 and D66; that span reads QYRDK. D67 and D86 together coordinate Mg(2+). 4-amino-2-methyl-5-(diphosphooxymethyl)pyrimidine is bound at residue S104. 2-[(2R,5Z)-2-carboxy-4-methylthiazol-5(2H)-ylidene]ethyl phosphate is bound at residue 131–133; sequence TST. Position 134 (K134) interacts with 4-amino-2-methyl-5-(diphosphooxymethyl)pyrimidine. Residues G160 and 180–181 contribute to the 2-[(2R,5Z)-2-carboxy-4-methylthiazol-5(2H)-ylidene]ethyl phosphate site; that span reads VS.

Belongs to the thiamine-phosphate synthase family. Mg(2+) serves as cofactor.

The catalysed reaction is 2-[(2R,5Z)-2-carboxy-4-methylthiazol-5(2H)-ylidene]ethyl phosphate + 4-amino-2-methyl-5-(diphosphooxymethyl)pyrimidine + 2 H(+) = thiamine phosphate + CO2 + diphosphate. It catalyses the reaction 2-(2-carboxy-4-methylthiazol-5-yl)ethyl phosphate + 4-amino-2-methyl-5-(diphosphooxymethyl)pyrimidine + 2 H(+) = thiamine phosphate + CO2 + diphosphate. It carries out the reaction 4-methyl-5-(2-phosphooxyethyl)-thiazole + 4-amino-2-methyl-5-(diphosphooxymethyl)pyrimidine + H(+) = thiamine phosphate + diphosphate. Its pathway is cofactor biosynthesis; thiamine diphosphate biosynthesis; thiamine phosphate from 4-amino-2-methyl-5-diphosphomethylpyrimidine and 4-methyl-5-(2-phosphoethyl)-thiazole: step 1/1. Condenses 4-methyl-5-(beta-hydroxyethyl)thiazole monophosphate (THZ-P) and 2-methyl-4-amino-5-hydroxymethyl pyrimidine pyrophosphate (HMP-PP) to form thiamine monophosphate (TMP). The protein is Thiamine-phosphate synthase of Picrophilus torridus (strain ATCC 700027 / DSM 9790 / JCM 10055 / NBRC 100828 / KAW 2/3).